Here is a 412-residue protein sequence, read N- to C-terminus: Phosphate-repressible acid phosphatase (412 aa).

An N-terminal signal peptide occupies residues 1–19 (MLTKQTLLAFVGALALATG). Asn74, Asn121, Asn186, and Asn208 each carry an N-linked (GlcNAc...) asparagine glycan. Residue Asp215 is the Proton donor of the active site. 3 N-linked (GlcNAc...) asparagine glycosylation sites follow: Asn217, Asn332, and Asn343.

In terms of processing, the N-terminus is blocked.

The protein localises to the secreted. The enzyme catalyses a phosphate monoester + H2O = an alcohol + phosphate. This is Phosphate-repressible acid phosphatase (PHOA) from Penicillium chrysogenum (Penicillium notatum).